Here is a 461-residue protein sequence, read N- to C-terminus: Bifunctional protein GlmU (461 aa).

The pyrophosphorylase stretch occupies residues 1-236 (MNVLLQELFI…VFEIFGINNR (236 aa)). UDP-N-acetyl-alpha-D-glucosamine contacts are provided by residues lysine 27, glutamine 80, 85-86 (GT), 109-111 (YGD), glycine 146, glutamate 160, asparagine 175, and asparagine 234. Residue aspartate 111 participates in Mg(2+) binding. Position 234 (asparagine 234) interacts with Mg(2+). The segment at 237–257 (FQLMKLEKIYQIEQAKKLLLN) is linker. The N-acetyltransferase stretch occupies residues 258–461 (GVTLSDYNRF…SILRKENNSK (204 aa)). Lysine 358 provides a ligand contact to UDP-N-acetyl-alpha-D-glucosamine. Histidine 370 (proton acceptor) is an active-site residue. Positions 373 and 384 each coordinate UDP-N-acetyl-alpha-D-glucosamine. Acetyl-CoA contacts are provided by alanine 387, alanine 430, and arginine 447.

This sequence in the N-terminal section; belongs to the N-acetylglucosamine-1-phosphate uridyltransferase family. The protein in the C-terminal section; belongs to the transferase hexapeptide repeat family. Homotrimer. The cofactor is Mg(2+).

The protein resides in the cytoplasm. The enzyme catalyses alpha-D-glucosamine 1-phosphate + acetyl-CoA = N-acetyl-alpha-D-glucosamine 1-phosphate + CoA + H(+). It carries out the reaction N-acetyl-alpha-D-glucosamine 1-phosphate + UTP + H(+) = UDP-N-acetyl-alpha-D-glucosamine + diphosphate. It functions in the pathway nucleotide-sugar biosynthesis; UDP-N-acetyl-alpha-D-glucosamine biosynthesis; N-acetyl-alpha-D-glucosamine 1-phosphate from alpha-D-glucosamine 6-phosphate (route II): step 2/2. Its pathway is nucleotide-sugar biosynthesis; UDP-N-acetyl-alpha-D-glucosamine biosynthesis; UDP-N-acetyl-alpha-D-glucosamine from N-acetyl-alpha-D-glucosamine 1-phosphate: step 1/1. The protein operates within bacterial outer membrane biogenesis; LPS lipid A biosynthesis. In terms of biological role, catalyzes the last two sequential reactions in the de novo biosynthetic pathway for UDP-N-acetylglucosamine (UDP-GlcNAc). The C-terminal domain catalyzes the transfer of acetyl group from acetyl coenzyme A to glucosamine-1-phosphate (GlcN-1-P) to produce N-acetylglucosamine-1-phosphate (GlcNAc-1-P), which is converted into UDP-GlcNAc by the transfer of uridine 5-monophosphate (from uridine 5-triphosphate), a reaction catalyzed by the N-terminal domain. The chain is Bifunctional protein GlmU from Wigglesworthia glossinidia brevipalpis.